The following is a 198-amino-acid chain: GTP-binding protein Di-Ras1 (198 aa).

Residues 17–22, 33–39, 61–65, 121–125, Ala-151, and 151–152 each bind GTP; these read GVGKSS, RDTYIPT, DTTGS, NKCDE, and AK. An Effector region motif is present at residues 36 to 44; it reads YIPTIEDTY. The segment covering 178–192 has biased composition (basic and acidic residues); the sequence is DGKRSGKQKRTDRVK. The tract at residues 178 to 198 is disordered; it reads DGKRSGKQKRTDRVKGKCTLM. Position 195 is a cysteine methyl ester (Cys-195). A lipid anchor (S-geranylgeranyl cysteine) is attached at Cys-195. The propeptide at 196-198 is removed in mature form; the sequence is TLM.

The protein belongs to the small GTPase superfamily. Di-Ras family. As to expression, highly expressed in heart and brain.

It is found in the cell membrane. In terms of biological role, displays low GTPase activity and exists predominantly in the GTP-bound form. This chain is GTP-binding protein Di-Ras1 (DIRAS1), found in Homo sapiens (Human).